The chain runs to 25 residues: Flagellar filament outer layer protein (25 aa).

As to quaternary structure, the flagellum consists of an outer layer composed of repeating units of FlaA around a core that contains several antigenically related polypeptides.

It is found in the periplasmic flagellum. Its subcellular location is the periplasm. Its function is as follows. Component of the outer layer of the flagella. In Treponema phagedenis, this protein is Flagellar filament outer layer protein (flaA).